We begin with the raw amino-acid sequence, 670 residues long: Neutral ceramidase (670 aa).

Residues 1 to 24 (MSRSAFTALLLSCVLLALSMPARA) form the signal peptide. A Mg(2+)-binding site is contributed by histidine 61. Residues asparagine 84, glutamine 92, and aspartate 111 each coordinate substrate. Histidine 121 is a binding site for Zn(2+). Serine 130 contacts substrate. Histidine 228 is a Zn(2+) binding site. The active-site Nucleophile is serine 274. The cysteines at positions 346 and 394 are disulfide-linked. Residue glutamate 435 participates in Zn(2+) binding. Tyrosine 469 contributes to the substrate binding site. A Zn(2+)-binding site is contributed by tyrosine 472. 3 residues coordinate Mg(2+): aspartate 603, aspartate 605, and threonine 608. The segment at 644 to 670 (NAKNFWTQKISEIGGSTRSFEVLGTTP) is required for correct folding and localization.

The protein belongs to the neutral ceramidase family. In terms of assembly, homodimer. The cofactor is Zn(2+). Mg(2+) is required as a cofactor.

The protein localises to the secreted. The enzyme catalyses an N-acylsphing-4-enine + H2O = sphing-4-enine + a fatty acid. Inhibited by EDTA, EGTA and D/L-sphinganine D-erythro-sphingosine. L-erythro-sphingosine is a less powerful inhibitor. Stimulated by glycerophospholipids: cardiolipin is the most effective, followed by phosphatidic acid, phosphatidylethanolamine and phosphatidylglycerol, whereas phosphatidylcholine, lysophosphatidic acid and diacylglycerol are less effective. Catalyzes the cleavage of the N-acyl linkage of the ceramides (Cers) to yield sphingosine (Sph) and free fatty acid at an optimal pH of 8-9. Also catalyzes the synthesis of Cers from Sph and fatty acid. This Pseudomonas aeruginosa (strain ATCC 15692 / DSM 22644 / CIP 104116 / JCM 14847 / LMG 12228 / 1C / PRS 101 / PAO1) protein is Neutral ceramidase.